The following is a 1000-amino-acid chain: Peroxisomal ATPase PEX6 (1000 aa).

742-749 (GPPGTGKT) contributes to the ATP binding site.

It belongs to the AAA ATPase family. Interacts with PEX1; forming the PEX1-PEX6 AAA ATPase complex, which is composed of a heterohexamer formed by a trimer of PEX1-PEX6 dimers.

It is found in the cytoplasm. The protein resides in the cytosol. It localises to the peroxisome membrane. It carries out the reaction ATP + H2O = ADP + phosphate + H(+). Its function is as follows. Component of the PEX1-PEX6 AAA ATPase complex, a protein dislocase complex that mediates the ATP-dependent extraction of the PEX5 receptor from peroxisomal membranes, an essential step for PEX5 recycling. Specifically recognizes PEX5 monoubiquitinated at 'Cys-6', and pulls it out of the peroxisome lumen through the PEX2-PEX10-PEX12 retrotranslocation channel. Extraction by the PEX1-PEX6 AAA ATPase complex is accompanied by unfolding of the TPR repeats and release of bound cargo from PEX5. This is Peroxisomal ATPase PEX6 (PEX6) from Kluyveromyces lactis (strain ATCC 8585 / CBS 2359 / DSM 70799 / NBRC 1267 / NRRL Y-1140 / WM37) (Yeast).